The sequence spans 293 residues: Oxidoreductase clz16 (293 aa).

Belongs to the asaB hydroxylase/desaturase family.

It participates in secondary metabolite biosynthesis. Functionally, oxidoreductase; part of the gene cluster that mediates the biosynthesis of squalestatin S1 (SQS1, also known as zaragozic acid A), a heavily oxidized fungal polyketide that offers potent cholesterol lowering activity by targeting squalene synthase (SS). SQS1 is composed of a 2,8-dioxobicyclic[3.2.1]octane-3,4,5-tricarboxyclic acid core that is connected to two lipophilic polyketide arms. These initial steps feature the priming of an unusual benzoic acid starter unit onto the highly reducing polyketide synthase clz14, followed by oxaloacetate extension and product release to generate a tricarboxylic acid containing product. The phenylalanine ammonia lyase (PAL) clz10 and the acyl-CoA ligase clz12 are involved in transforming phenylalanine into benzoyl-CoA. The citrate synthase-like protein clz17 is involved in connecting the C-alpha-carbons of the hexaketide chain and oxaloacetate to afford the tricarboxylic acid unit. The potential hydrolytic enzymes, clz11 and clz13, are in close proximity to pks2 and may participate in product release. On the other side, the tetraketide arm is synthesized by a the squalestatin tetraketide synthase clz2 and enzymatically esterified to the core in the last biosynthetic step, by the acetyltransferase clz6. The biosynthesis of the tetraketide must involve 3 rounds of chain extension. After the first and second rounds methyl-transfer occurs, and in all rounds of extension the ketoreductase and dehydratase are active. The enoyl reductase and C-MeT of clz2 are not active in the final round of extension. The acetyltransferase clz6 appears to have a broad substrate selectivity for its acyl CoA substrate, allowing the in vitro synthesis of novel squalestatins. The biosynthesis of SQS1 requires several oxidative steps likely performed by oxidoreductases clz3, clz15 and clz16. Finally, in support of the identification of the cluster as being responsible for SQS1 production, the cluster contains a gene encoding a putative squalene synthase (SS) clz20, suggesting a likely mechanism for self-resistance. The protein is Oxidoreductase clz16 of Cochliobolus lunatus (Filamentous fungus).